Here is a 597-residue protein sequence, read N- to C-terminus: Phosphomethylpyrimidine synthase (597 aa).

Residues N207, M236, Y265, H301, 321 to 323, 362 to 365, and E401 each bind substrate; these read SRG and DGLR. H405 provides a ligand contact to Zn(2+). Position 428 (Y428) interacts with substrate. H469 is a binding site for Zn(2+). [4Fe-4S] cluster contacts are provided by C549, C552, and C557.

It belongs to the ThiC family. As to quaternary structure, homodimer. Requires [4Fe-4S] cluster as cofactor.

The enzyme catalyses 5-amino-1-(5-phospho-beta-D-ribosyl)imidazole + S-adenosyl-L-methionine = 4-amino-2-methyl-5-(phosphooxymethyl)pyrimidine + CO + 5'-deoxyadenosine + formate + L-methionine + 3 H(+). Its pathway is cofactor biosynthesis; thiamine diphosphate biosynthesis. In terms of biological role, catalyzes the synthesis of the hydroxymethylpyrimidine phosphate (HMP-P) moiety of thiamine from aminoimidazole ribotide (AIR) in a radical S-adenosyl-L-methionine (SAM)-dependent reaction. The chain is Phosphomethylpyrimidine synthase from Gluconobacter oxydans (strain 621H) (Gluconobacter suboxydans).